The sequence spans 325 residues: Eukaryotic translation initiation factor 3 subunit I (325 aa).

4 WD repeats span residues 8–47 (GHER…RLGT), 50–91 (GHTG…ALLK), 144–183 (CNDS…VLVN), and 186–225 (EHSR…HQKT). Residue Thr-219 is modified to Phosphothreonine. N6-acetyllysine is present on Lys-264. Lys-282 participates in a covalent cross-link: Glycyl lysine isopeptide (Lys-Gly) (interchain with G-Cter in ubiquitin). The WD 5 repeat unit spans residues 283–324 (GHFGLINSVAFHPDGKSYSSGGEDGYVRIHYFDPQYFEFEFE). Tyr-308 is subject to Phosphotyrosine.

It belongs to the eIF-3 subunit I family. As to quaternary structure, component of the eukaryotic translation initiation factor 3 (eIF-3) complex, which is composed of 13 subunits: EIF3A, EIF3B, EIF3C, EIF3D, EIF3E, EIF3F, EIF3G, EIF3H, EIF3I, EIF3J, EIF3K, EIF3L and EIF3M. The eIF-3 complex appears to include 3 stable modules: module A is composed of EIF3A, EIF3B, EIF3G and EIF3I; module B is composed of EIF3F, EIF3H, and EIF3M; and module C is composed of EIF3C, EIF3D, EIF3E, EIF3K and EIF3L. EIF3C of module C binds EIF3B of module A and EIF3H of module B, thereby linking the three modules. EIF3J is a labile subunit that binds to the eIF-3 complex via EIF3B. The eIF-3 complex interacts with RPS6KB1 under conditions of nutrient depletion. Mitogenic stimulation leads to binding and activation of a complex composed of MTOR and RPTOR, leading to phosphorylation and release of RPS6KB1 and binding of EIF4B to eIF-3. Phosphorylated by TGF-beta type II receptor.

The protein localises to the cytoplasm. Component of the eukaryotic translation initiation factor 3 (eIF-3) complex, which is required for several steps in the initiation of protein synthesis. The eIF-3 complex associates with the 40S ribosome and facilitates the recruitment of eIF-1, eIF-1A, eIF-2:GTP:methionyl-tRNAi and eIF-5 to form the 43S pre-initiation complex (43S PIC). The eIF-3 complex stimulates mRNA recruitment to the 43S PIC and scanning of the mRNA for AUG recognition. The eIF-3 complex is also required for disassembly and recycling of post-termination ribosomal complexes and subsequently prevents premature joining of the 40S and 60S ribosomal subunits prior to initiation. The eIF-3 complex specifically targets and initiates translation of a subset of mRNAs involved in cell proliferation, including cell cycling, differentiation and apoptosis, and uses different modes of RNA stem-loop binding to exert either translational activation or repression. In Pongo abelii (Sumatran orangutan), this protein is Eukaryotic translation initiation factor 3 subunit I.